We begin with the raw amino-acid sequence, 196 residues long: Superoxide dismutase [Fe] (196 aa).

Positions 20, 68, 157, and 161 each coordinate Fe cation.

It belongs to the iron/manganese superoxide dismutase family. Homotetramer. It depends on Fe cation as a cofactor.

The enzyme catalyses 2 superoxide + 2 H(+) = H2O2 + O2. In terms of biological role, destroys superoxide anion radicals which are normally produced within the cells and which are toxic to biological systems. This is Superoxide dismutase [Fe] from Tetrahymena pyriformis.